A 475-amino-acid polypeptide reads, in one-letter code: Sulfate adenylyltransferase subunit 1 (475 aa).

The 215-residue stretch at 25 to 239 (KSLLRFLTCG…EVLETVEIQR (215 aa)) folds into the tr-type G domain. Positions 34–41 (GSVDDGKS) are G1. GTP is bound at residue 34-41 (GSVDDGKS). The tract at residues 92 to 96 (GITID) is G2. Positions 113–116 (DTPG) are G3. GTP contacts are provided by residues 113–117 (DTPGH) and 168–171 (NKMD). Residues 168–171 (NKMD) are G4. The segment at 206–208 (SAL) is G5.

Belongs to the TRAFAC class translation factor GTPase superfamily. Classic translation factor GTPase family. CysN/NodQ subfamily. As to quaternary structure, heterodimer composed of CysD, the smaller subunit, and CysN.

The enzyme catalyses sulfate + ATP + H(+) = adenosine 5'-phosphosulfate + diphosphate. It participates in sulfur metabolism; hydrogen sulfide biosynthesis; sulfite from sulfate: step 1/3. Its function is as follows. With CysD forms the ATP sulfurylase (ATPS) that catalyzes the adenylation of sulfate producing adenosine 5'-phosphosulfate (APS) and diphosphate, the first enzymatic step in sulfur assimilation pathway. APS synthesis involves the formation of a high-energy phosphoric-sulfuric acid anhydride bond driven by GTP hydrolysis by CysN coupled to ATP hydrolysis by CysD. The sequence is that of Sulfate adenylyltransferase subunit 1 from Shigella sonnei (strain Ss046).